A 680-amino-acid chain; its full sequence is DNA-directed RNA polymerase subunit beta' (680 aa).

4 residues coordinate Zn(2+): cysteine 69, cysteine 71, cysteine 87, and cysteine 90. 3 residues coordinate Mg(2+): aspartate 489, aspartate 491, and aspartate 493.

It belongs to the RNA polymerase beta' chain family. RpoC1 subfamily. As to quaternary structure, in plastids the minimal PEP RNA polymerase catalytic core is composed of four subunits: alpha, beta, beta', and beta''. When a (nuclear-encoded) sigma factor is associated with the core the holoenzyme is formed, which can initiate transcription. The cofactor is Mg(2+). Zn(2+) serves as cofactor.

The protein resides in the plastid. Its subcellular location is the chloroplast. The catalysed reaction is RNA(n) + a ribonucleoside 5'-triphosphate = RNA(n+1) + diphosphate. DNA-dependent RNA polymerase catalyzes the transcription of DNA into RNA using the four ribonucleoside triphosphates as substrates. This chain is DNA-directed RNA polymerase subunit beta', found in Ceratophyllum demersum (Rigid hornwort).